The chain runs to 314 residues: Melanoma-associated antigen 6 (314 aa).

Residues Met-1–Gly-20 show a composition bias toward basic and acidic residues. The disordered stretch occupies residues Met-1–Pro-99. Low complexity predominate over residues Glu-21–Thr-44. Over residues Pro-65–Ser-87 the composition is skewed to polar residues. The MAGE domain occupies Leu-109–Ala-308.

In terms of assembly, interacts with TRIM28. In terms of processing, ubiquitinated by the DCX(DCAF12) complex specifically recognizes the diglutamate (Glu-Glu) at the C-terminus, leading to its degradation. Expressed in many tumors of several types, such as melanoma, head and neck squamous cell carcinoma, lung carcinoma and breast carcinoma, but not in normal tissues except for testes.

Functionally, activator of ubiquitin ligase activity of RING-type zinc finger-containing E3 ubiquitin-protein ligases that acts as a repressor of autophagy. May enhance ubiquitin ligase activity of TRIM28 and stimulate p53/TP53 ubiquitination by TRIM28. Proposed to act through recruitment and/or stabilization of the Ubl-conjugating enzyme (E2) at the E3:substrate complex. May play a role in tumor transformation or aspects of tumor progression. In vitro promotes cell viability in melanoma cell lines. This is Melanoma-associated antigen 6 from Homo sapiens (Human).